The following is a 223-amino-acid chain: Deoxyribose-phosphate aldolase (223 aa).

Asp89 (proton donor/acceptor) is an active-site residue. Lys152 acts as the Schiff-base intermediate with acetaldehyde in catalysis. Lys181 functions as the Proton donor/acceptor in the catalytic mechanism.

The protein belongs to the DeoC/FbaB aldolase family. DeoC type 1 subfamily.

It localises to the cytoplasm. It catalyses the reaction 2-deoxy-D-ribose 5-phosphate = D-glyceraldehyde 3-phosphate + acetaldehyde. Its pathway is carbohydrate degradation; 2-deoxy-D-ribose 1-phosphate degradation; D-glyceraldehyde 3-phosphate and acetaldehyde from 2-deoxy-alpha-D-ribose 1-phosphate: step 2/2. In terms of biological role, catalyzes a reversible aldol reaction between acetaldehyde and D-glyceraldehyde 3-phosphate to generate 2-deoxy-D-ribose 5-phosphate. This chain is Deoxyribose-phosphate aldolase, found in Bacillus cereus (strain ATCC 10987 / NRS 248).